A 434-amino-acid chain; its full sequence is Serine/threonine-protein kinase Sgk1-B (434 aa).

Positions 68-94 (ESELLNENSSPPPSHSQQINLGPSSNP) are disordered. A Protein kinase domain is found at 101 to 358 (FQFLKIIGKG…FMEIKNHIFF (258 aa)). ATP is bound by residues 107-115 (IGKGSFGKV) and Lys130. Asp225 acts as the Proton acceptor in catalysis. The 76-residue stretch at 359–434 (SPIDWDDLIN…SYAPPMDSYL (76 aa)) folds into the AGC-kinase C-terminal domain.

The protein belongs to the protein kinase superfamily. AGC Ser/Thr protein kinase family.

It is found in the cytoplasm. The protein localises to the nucleus. The protein resides in the endoplasmic reticulum. It carries out the reaction L-seryl-[protein] + ATP = O-phospho-L-seryl-[protein] + ADP + H(+). The catalysed reaction is L-threonyl-[protein] + ATP = O-phospho-L-threonyl-[protein] + ADP + H(+). Functionally, protein kinase that may play an important role in cellular stress response. Plays an important role in activating certain potassium, sodium, and chloride channels, suggesting an involvement in the regulation of processes such as cell survival, neuronal excitability and renal sodium excretion. The polypeptide is Serine/threonine-protein kinase Sgk1-B (sgk1-b) (Xenopus laevis (African clawed frog)).